The following is a 698-amino-acid chain: Putative transposon gamma-delta 80.3 kDa protein (698 aa).

The protein is Putative transposon gamma-delta 80.3 kDa protein (tnpX) of Escherichia coli (strain K12).